The following is a 284-amino-acid chain: Proteasome subunit beta 1 (284 aa).

The propeptide at 1–56 is removed in mature form; by autocatalysis; sequence MASHDSYTGRLPGAFMNPGTSSFTEFLASYNPDLLPGRHMTALAGGMPGNVEAPHA. Thr57 acts as the Nucleophile in catalysis.

Belongs to the peptidase T1B family. The 20S proteasome core is composed of 14 alpha and 14 beta subunits that assemble into four stacked heptameric rings, resulting in a barrel-shaped structure. The two inner rings, each composed of seven catalytic beta subunits, are sandwiched by two outer rings, each composed of seven alpha subunits. The catalytic chamber with the active sites is on the inside of the barrel. Has a gated structure, the ends of the cylinder being occluded by the N-termini of the alpha-subunits. Is capped by the proteasome-associated ATPase, ARC.

It is found in the cytoplasm. It catalyses the reaction Cleavage of peptide bonds with very broad specificity.. It participates in protein degradation; proteasomal Pup-dependent pathway. The formation of the proteasomal ATPase ARC-20S proteasome complex, likely via the docking of the C-termini of ARC into the intersubunit pockets in the alpha-rings, may trigger opening of the gate for substrate entry. Interconversion between the open-gate and close-gate conformations leads to a dynamic regulation of the 20S proteasome proteolysis activity. Functionally, component of the proteasome core, a large protease complex with broad specificity involved in protein degradation. This chain is Proteasome subunit beta 1, found in Thermomonospora curvata (strain ATCC 19995 / DSM 43183 / JCM 3096 / KCTC 9072 / NBRC 15933 / NCIMB 10081 / Henssen B9).